Consider the following 115-residue polypeptide: uncharacterized protein (115 aa).

The disordered stretch occupies residues 1–74 (MGTGLRSQSL…VPGSLGDTEQ (74 aa)).

This is an uncharacterized protein from Homo sapiens (Human).